Here is a 234-residue protein sequence, read N- to C-terminus: MKIIRVQDQIEGGKIAFTLLKDSLAKGAKTLGLATGSSPISFYQEMVKSPLDFSDLTSINLDEYVGLSVESDQSYDYFMRQNLFNAKPFKKNYLPNGLATDVEAEAKRYNQIIAEHPIDFQVLGIGRNGHIGFNEPGTSFEEETHVVDLQESTIEANSRFFTSIEDVPKQAISMGIASIMKSEMIVLLAFGQEKADAIKGMVFGPITEHLPASILQKHDHVIVIVDEAAASQLD.

The active-site Proton acceptor; for enolization step is D62. Catalysis depends on N128, which acts as the For ring-opening step. Residue H130 is the Proton acceptor; for ring-opening step of the active site. E135 acts as the For ring-opening step in catalysis.

This sequence belongs to the glucosamine/galactosamine-6-phosphate isomerase family. NagB subfamily.

It carries out the reaction alpha-D-glucosamine 6-phosphate + H2O = beta-D-fructose 6-phosphate + NH4(+). Its pathway is amino-sugar metabolism; N-acetylneuraminate degradation; D-fructose 6-phosphate from N-acetylneuraminate: step 5/5. In terms of biological role, catalyzes the reversible isomerization-deamination of glucosamine 6-phosphate (GlcN6P) to form fructose 6-phosphate (Fru6P) and ammonium ion. The protein is Glucosamine-6-phosphate deaminase of Streptococcus pyogenes serotype M1.